Consider the following 205-residue polypeptide: uncharacterized protein (205 aa).

Belongs to the IIV-6 170L family.

This is an uncharacterized protein from Invertebrate iridescent virus 3 (IIV-3).